Consider the following 360-residue polypeptide: Uroporphyrinogen decarboxylase (360 aa).

Residues 31–35 (RQAGR), D81, Y157, T212, and H333 each bind substrate.

It belongs to the uroporphyrinogen decarboxylase family. In terms of assembly, homodimer.

Its subcellular location is the cytoplasm. It carries out the reaction uroporphyrinogen III + 4 H(+) = coproporphyrinogen III + 4 CO2. The protein operates within porphyrin-containing compound metabolism; protoporphyrin-IX biosynthesis; coproporphyrinogen-III from 5-aminolevulinate: step 4/4. Functionally, catalyzes the decarboxylation of four acetate groups of uroporphyrinogen-III to yield coproporphyrinogen-III. This Herminiimonas arsenicoxydans protein is Uroporphyrinogen decarboxylase.